A 259-amino-acid polypeptide reads, in one-letter code: MNLVDLWLTRSLSMCLLLQSFVLMILCFHSASMCPKGCLCSSSGGLNVTCSNANLKEIPRDLPPETVLLYLDSNQITSIPNEIFKDLHQLRVLNLSKNGIEFIDEHAFKGVAETLQTLDLSDNRIQSVHKNAFNNLKARARIANNPWHCDCTLQQVLRSMASNHETAHNVICKTSVLDEHAGRPFLNAANDADLCNLPKKTTDYAMLVTMFGWFTMVISYVVYYVRQNQEDARRHLEYLKSLPSRQKKADEPDDISTVV.

The signal sequence occupies residues 1 to 33; the sequence is MNLVDLWLTRSLSMCLLLQSFVLMILCFHSASM. Residues 34–64 enclose the LRRNT domain; it reads CPKGCLCSSSGGLNVTCSNANLKEIPRDLPP. Asn-47 is a glycosylation site (N-linked (GlcNAc...) asparagine). LRR repeat units lie at residues 65–86, 89–110, and 114–135; these read ETVL…IFKD, QLRV…AFKG, and TLQT…AFNN. A glycan (N-linked (GlcNAc...) asparagine) is linked at Asn-94. The LRRCT domain occupies 145-197; that stretch reads NPWHCDCTLQQVLRSMASNHETAHNVICKTSVLDEHAGRPFLNAANDADLCNL. A helical transmembrane segment spans residues 205 to 225; it reads AMLVTMFGWFTMVISYVVYYV.

It belongs to the LRRC3 family.

The protein localises to the membrane. This is Leucine-rich repeat-containing protein 3B (LRRC3B) from Homo sapiens (Human).